The sequence spans 367 residues: RYamide receptor (367 aa).

The Extracellular segment spans residues 1 to 35 (MDANTTRNESFSLDCELVNPNSTLANVYFLSAVYS). N-linked (GlcNAc...) asparagine glycans are attached at residues asparagine 4, asparagine 8, and asparagine 21. A helical membrane pass occupies residues 36–56 (MYAIIFVVALIGNSFVCYIVL). Over 57-66 (SSPPMRTVTN) the chain is Cytoplasmic. A helical transmembrane segment spans residues 67–87 (FFILNLAIGDVLITLLCVPFT). The Extracellular portion of the chain corresponds to 88 to 113 (SVSLLMQYWPFGGILCPVVNYSQALS). Asparagine 107 carries N-linked (GlcNAc...) asparagine glycosylation. A helical membrane pass occupies residues 114 to 134 (VFVSAYTLVAISIDKYMIIMW). The Cytoplasmic portion of the chain corresponds to 135–143 (PLKPRISKR). The chain crosses the membrane as a helical span at residues 144 to 164 (FATYIIALVWLIAGITVLPSA). The Extracellular segment spans residues 165–212 (TFTTLINDENILGTSAYEQCDKYICAEEYSKVGQEYGDLYTKVLMFLQ). The helical transmembrane segment at 213–233 (YVIPSLVLLFTYTSIGVVIWC) threads the bilayer. Over 234–258 (HRIPGEAENSRDQRIAKNKTKMIKM) the chain is Cytoplasmic. A helical transmembrane segment spans residues 259–279 (MVTVVCVYTICWLPYNVLMIF). At 280-282 (KEH) the chain is on the extracellular side. The helical transmembrane segment at 283–303 (ISGSVMVYLYFPLHGLAMSHA) threads the bilayer. Over 304-367 (CYNPIIYCYM…EITRAQPTSA (64 aa)) the chain is Cytoplasmic.

The protein belongs to the G-protein coupled receptor 1 family.

Its subcellular location is the cell membrane. Functionally, receptor for the neuropeptides RYamide-1 and RYamide-2. The activity of this receptor is mediated by G proteins which activate a phosphatidyl-inositol-calcium second messenger system. RYamide-2 is the most potent activator. The sequence is that of RYamide receptor from Tribolium castaneum (Red flour beetle).